We begin with the raw amino-acid sequence, 256 residues long: Hydroxypyruvate/pyruvate aldolase (256 aa).

Histidine 48 (proton acceptor) is an active-site residue. Glutamate 152 and aspartate 178 together coordinate a divalent metal cation.

Belongs to the HpcH/HpaI aldolase family. Requires a divalent metal cation as cofactor.

The catalysed reaction is D-glyceraldehyde + pyruvate = 2-dehydro-3-deoxy-L-galactonate. Its function is as follows. Aldolase which can catalyze in vitro the aldolisation reaction between hydroxypyruvate (HPA) or pyruvate (PA) and D-glyceraldehyde (D-GA). The condensation of pyruvate and D-glyceraldehyde produces 2-dehydro-3-deoxy-L-galactonate as the major product. Has weak activity with hydroxypyruvate and D-glyceraldehyde. In Roseobacter denitrificans (strain ATCC 33942 / OCh 114) (Erythrobacter sp. (strain OCh 114)), this protein is Hydroxypyruvate/pyruvate aldolase.